Consider the following 387-residue polypeptide: Thermostable celloxylanase (387 aa).

Positions alanine 41–proline 382 constitute a GH10 domain. Glutamate 185 serves as the catalytic Proton donor. Glutamate 293 acts as the Nucleophile in catalysis.

It belongs to the glycosyl hydrolase 10 (cellulase F) family.

The catalysed reaction is Endohydrolysis of (1-&gt;4)-beta-D-glucosidic linkages in cellulose, lichenin and cereal beta-D-glucans.. It carries out the reaction Endohydrolysis of (1-&gt;4)-beta-D-xylosidic linkages in xylans.. Its pathway is glycan degradation; xylan degradation. Active toward xylan, carboxymethylcellulose, P-nitrophenyl-beta-D-xylopyranoside and P-nitrophenyl-beta-D-cellobioside. In Thermoclostridium stercorarium (Clostridium stercorarium), this protein is Thermostable celloxylanase (xynB).